Reading from the N-terminus, the 197-residue chain is UPF0314 protein NGR_c32320 (197 aa).

A run of 3 helical transmembrane segments spans residues 16 to 36 (WIWL…QHLM), 66 to 86 (WYTP…YLLL), and 152 to 172 (LPVA…GWII).

This sequence belongs to the UPF0314 family.

The protein resides in the cell membrane. The sequence is that of UPF0314 protein NGR_c32320 from Sinorhizobium fredii (strain NBRC 101917 / NGR234).